Reading from the N-terminus, the 270-residue chain is ATP synthase subunit a (270 aa).

A run of 5 helical transmembrane segments spans residues 37 to 57 (NVHIDSLFFSVFTGMLFLWVF), 98 to 118 (IAPLALTIFCWVILMNLMDLV), 143 to 163 (DVNITMAMALGVFALMIYYSI), 217 to 237 (VVFILIAAMLPWYLQWVGALP), and 239 to 259 (AIFHILVILIQAFVFMMLTIV).

It belongs to the ATPase A chain family. In terms of assembly, F-type ATPases have 2 components, CF(1) - the catalytic core - and CF(0) - the membrane proton channel. CF(1) has five subunits: alpha(3), beta(3), gamma(1), delta(1), epsilon(1). CF(0) has three main subunits: a(1), b(2) and c(9-12). The alpha and beta chains form an alternating ring which encloses part of the gamma chain. CF(1) is attached to CF(0) by a central stalk formed by the gamma and epsilon chains, while a peripheral stalk is formed by the delta and b chains.

Its subcellular location is the cell inner membrane. Its function is as follows. Key component of the proton channel; it plays a direct role in the translocation of protons across the membrane. The protein is ATP synthase subunit a of Aliivibrio fischeri (strain ATCC 700601 / ES114) (Vibrio fischeri).